A 433-amino-acid polypeptide reads, in one-letter code: Small ribosomal subunit biogenesis GTPase RsgA 1, mitochondrial (433 aa).

The disordered stretch occupies residues 1–20 (MLRAKHIGKNYSSSLSPVLS). The 179-residue stretch at 113–291 (SEILDPPVAN…LADTPGFNQP (179 aa)) folds into the CP-type G domain. 212-220 (GPSGVGKSS) contacts GTP. The Zn(2+) site is built by cysteine 317, cysteine 322, histidine 324, and cysteine 330.

Belongs to the TRAFAC class YlqF/YawG GTPase family. RsgA subfamily. As to quaternary structure, monomer. Associates with 30S ribosomal subunit, binds 16S rRNA. Requires Zn(2+) as cofactor.

It is found in the mitochondrion. Functionally, one of several proteins that assist in the late maturation steps of the functional core of the 30S ribosomal subunit. Helps release RbfA from mature subunits. May play a role in the assembly of ribosomal proteins into the subunit. Circularly permuted GTPase that catalyzes slow GTP hydrolysis, GTPase activity is stimulated by the 30S ribosomal subunit. Required for embryo development. This chain is Small ribosomal subunit biogenesis GTPase RsgA 1, mitochondrial, found in Arabidopsis thaliana (Mouse-ear cress).